Here is a 177-residue protein sequence, read N- to C-terminus: Ribulose bisphosphate carboxylase small subunit, chloroplastic (177 aa).

A chloroplast-targeting transit peptide spans Met1–Asn55.

This sequence belongs to the RuBisCO small chain family. As to quaternary structure, heterohexadecamer of 8 large and 8 small subunits.

It localises to the plastid. It is found in the chloroplast. Its function is as follows. RuBisCO catalyzes two reactions: the carboxylation of D-ribulose 1,5-bisphosphate, the primary event in carbon dioxide fixation, as well as the oxidative fragmentation of the pentose substrate. Both reactions occur simultaneously and in competition at the same active site. Although the small subunit is not catalytic it is essential for maximal activity. The polypeptide is Ribulose bisphosphate carboxylase small subunit, chloroplastic (Silene latifolia subsp. alba (White campion)).